Here is a 518-residue protein sequence, read N- to C-terminus: Cyclin-L2 (518 aa).

Cyclin-like regions lie at residues 81 to 183 (ELIQ…RVLK) and 196 to 280 (KIIV…KILQ). Residues 310 to 518 (AKGLLPGTAP…DHPGHSRHRR (209 aa)) form a disordered region. Ser-328, Ser-335, Ser-345, Ser-348, and Ser-366 each carry phosphoserine. The tract at residues 382–420 (RSREQSYSRSPSRSASPKRRKSDSGSTSGGSKSQSRSRS) is RS. Low complexity predominate over residues 405–427 (SGSTSGGSKSQSRSRSRSDSPPR). Residues 438–450 (SEVRGSRKSKDCK) show a composition bias toward basic and acidic residues. Basic residues predominate over residues 455–469 (KPHKSRSRSSSRSRS). 2 stretches are compositionally biased toward basic and acidic residues: residues 470–479 (RSRERTDNSG) and 487–512 (YYRD…DHPG).

This sequence belongs to the cyclin family. Cyclin L subfamily. As to quaternary structure, interacts with CDK11A, CDK11B, CDK12, CDK13 and POLR2A, the hyperphosphorylated C-terminal domain (CTD) of RNA polymerase II. May form a ternary complex with CDK11B and casein kinase II (CKII). Interacts with pre-mRNA-splicing factors, including at least SRSF1, SRSF2 and SRSF7/SLU7. As to expression, widely expressed (at protein level).

Its subcellular location is the nucleus speckle. The protein resides in the nucleus. It localises to the nucleoplasm. Functionally, involved in pre-mRNA splicing. May induce cell death, possibly by acting on the transcription and RNA processing of apoptosis-related factors. The chain is Cyclin-L2 (Ccnl2) from Mus musculus (Mouse).